Here is a 102-residue protein sequence, read N- to C-terminus: Large ribosomal subunit protein bL21 (102 aa).

The protein belongs to the bacterial ribosomal protein bL21 family. In terms of assembly, part of the 50S ribosomal subunit. Contacts protein L20.

This protein binds to 23S rRNA in the presence of protein L20. The protein is Large ribosomal subunit protein bL21 of Listeria monocytogenes serotype 4b (strain F2365).